The primary structure comprises 353 residues: Alanine racemase (353 aa).

The Proton acceptor; specific for D-alanine role is filled by K34. K34 carries the N6-(pyridoxal phosphate)lysine modification. Position 128 (R128) interacts with substrate. Y251 (proton acceptor; specific for L-alanine) is an active-site residue. M299 lines the substrate pocket.

This sequence belongs to the alanine racemase family. Pyridoxal 5'-phosphate serves as cofactor.

It catalyses the reaction L-alanine = D-alanine. Its pathway is amino-acid biosynthesis; D-alanine biosynthesis; D-alanine from L-alanine: step 1/1. Its function is as follows. Catalyzes the interconversion of L-alanine and D-alanine. May also act on other amino acids. The sequence is that of Alanine racemase (alr) from Alcanivorax borkumensis (strain ATCC 700651 / DSM 11573 / NCIMB 13689 / SK2).